A 269-amino-acid polypeptide reads, in one-letter code: Formamidopyrimidine-DNA glycosylase (269 aa).

P2 functions as the Schiff-base intermediate with DNA in the catalytic mechanism. The Proton donor role is filled by E3. Catalysis depends on K57, which acts as the Proton donor; for beta-elimination activity. DNA-binding residues include H90, R109, and K150. An FPG-type zinc finger spans residues 235-269 (QVYGRHGEPCYTCGEFIQIAKYGQRSSFFCPSCQN). The active-site Proton donor; for delta-elimination activity is R259.

Belongs to the FPG family. In terms of assembly, monomer. Zn(2+) serves as cofactor.

The catalysed reaction is Hydrolysis of DNA containing ring-opened 7-methylguanine residues, releasing 2,6-diamino-4-hydroxy-5-(N-methyl)formamidopyrimidine.. It catalyses the reaction 2'-deoxyribonucleotide-(2'-deoxyribose 5'-phosphate)-2'-deoxyribonucleotide-DNA = a 3'-end 2'-deoxyribonucleotide-(2,3-dehydro-2,3-deoxyribose 5'-phosphate)-DNA + a 5'-end 5'-phospho-2'-deoxyribonucleoside-DNA + H(+). In terms of biological role, involved in base excision repair of DNA damaged by oxidation or by mutagenic agents. Acts as a DNA glycosylase that recognizes and removes damaged bases. Has a preference for oxidized purines, such as 7,8-dihydro-8-oxoguanine (8-oxoG). Has AP (apurinic/apyrimidinic) lyase activity and introduces nicks in the DNA strand. Cleaves the DNA backbone by beta-delta elimination to generate a single-strand break at the site of the removed base with both 3'- and 5'-phosphates. This is Formamidopyrimidine-DNA glycosylase from Baumannia cicadellinicola subsp. Homalodisca coagulata.